The primary structure comprises 227 residues: Orotidine 5'-phosphate decarboxylase (227 aa).

Residues D12, K34, 61 to 70 (DLKLHDIPNT), T117, R178, Q187, G207, and R208 contribute to the substrate site. The Proton donor role is filled by K63.

Belongs to the OMP decarboxylase family. Type 1 subfamily. Homodimer.

It catalyses the reaction orotidine 5'-phosphate + H(+) = UMP + CO2. Its pathway is pyrimidine metabolism; UMP biosynthesis via de novo pathway; UMP from orotate: step 2/2. Functionally, catalyzes the decarboxylation of orotidine 5'-monophosphate (OMP) to uridine 5'-monophosphate (UMP). This is Orotidine 5'-phosphate decarboxylase from Anaeromyxobacter dehalogenans (strain 2CP-1 / ATCC BAA-258).